Consider the following 200-residue polypeptide: ATP-dependent Clp protease proteolytic subunit (200 aa).

Residue Ser-101 is the Nucleophile of the active site. His-126 is an active-site residue.

This sequence belongs to the peptidase S14 family. As to quaternary structure, component of the chloroplastic Clp protease core complex.

The protein localises to the plastid. The protein resides in the chloroplast stroma. It carries out the reaction Hydrolysis of proteins to small peptides in the presence of ATP and magnesium. alpha-casein is the usual test substrate. In the absence of ATP, only oligopeptides shorter than five residues are hydrolyzed (such as succinyl-Leu-Tyr-|-NHMec, and Leu-Tyr-Leu-|-Tyr-Trp, in which cleavage of the -Tyr-|-Leu- and -Tyr-|-Trp bonds also occurs).. Its function is as follows. Cleaves peptides in various proteins in a process that requires ATP hydrolysis. Has a chymotrypsin-like activity. Plays a major role in the degradation of misfolded proteins. This chain is ATP-dependent Clp protease proteolytic subunit, found in Adiantum capillus-veneris (Maidenhair fern).